Reading from the N-terminus, the 178-residue chain is Protamine-like protein (178 aa).

Disordered regions lie at residues 1–27 (PSTT…TVSD) and 77–178 (SVVK…RAKK). Basic residues-rich tracts occupy residues 8-21 (SPKR…RKRT) and 94-178 (PRRR…RAKK). The H15 domain maps to 21 to 89 (TGPTVSDLIL…KAKGFYKLNK (69 aa)).

As to expression, male germ cells.

The protein resides in the nucleus. It is found in the chromosome. Its function is as follows. Replaces histones in the chromatin of sperm during the haploid phase of spermatogenesis. Compacts sperm DNA into a highly condensed, stable and inactive complex. This Mullus surmuletus (Striped red mullet) protein is Protamine-like protein.